The primary structure comprises 89 residues: MTEAATSLKRTLVGRVVSSKMDKTVTVLVENRVKHPLYGKYVVRSKKYHAHDEANQYKEGDRVEIVESRPISRTKAWVVSRLVEAARVI.

It belongs to the universal ribosomal protein uS17 family. In terms of assembly, part of the 30S ribosomal subunit.

In terms of biological role, one of the primary rRNA binding proteins, it binds specifically to the 5'-end of 16S ribosomal RNA. This is Small ribosomal subunit protein uS17 from Ralstonia nicotianae (strain ATCC BAA-1114 / GMI1000) (Ralstonia solanacearum).